The following is a 436-amino-acid chain: Enolase 1 (436 aa).

Residue Ser40 coordinates Mg(2+). A disulfide bond links Cys147 and Cys169. Positions 164 and 208 each coordinate (2R)-2-phosphoglycerate. Glu208 (proton donor) is an active-site residue. Mg(2+)-binding residues include Asp243, Glu296, and Asp322. Asp322 contributes to the (2R)-2-phosphoglycerate binding site. The active-site Proton acceptor is Lys347. (2R)-2-phosphoglycerate contacts are provided by Arg376 and Ser377.

This sequence belongs to the enolase family. As to quaternary structure, homodimer. Homotetramer. Interacts with methyltransferase METH; the interaction inhibits METH catalytic activity; 2-phosphoglycerate binding to ENO prevents the interaction with METH. Mg(2+) is required as a cofactor.

It is found in the cytoplasm. It localises to the nucleus. The catalysed reaction is (2R)-2-phosphoglycerate = phosphoenolpyruvate + H2O. It functions in the pathway carbohydrate degradation; glycolysis; pyruvate from D-glyceraldehyde 3-phosphate: step 4/5. Its function is as follows. Glycolytic enzyme that catalyzes the conversion of 2-phosphoglycerate to phosphoenolpyruvate. Inhibits tRNA methyltransferase METH catalytic activity in the absence of 2-phosphoglycerate. In Entamoeba histolytica (strain ATCC 30459 / HM-1:IMSS / ABRM), this protein is Enolase 1.